The sequence spans 295 residues: UDP-N-acetylenolpyruvoylglucosamine reductase (295 aa).

The FAD-binding PCMH-type domain maps to 23-188; it reads KVGGPADFLA…ISAKFALKPG (166 aa). R167 is a catalytic residue. S217 serves as the catalytic Proton donor. E287 is a catalytic residue.

It belongs to the MurB family. Requires FAD as cofactor.

It localises to the cytoplasm. It carries out the reaction UDP-N-acetyl-alpha-D-muramate + NADP(+) = UDP-N-acetyl-3-O-(1-carboxyvinyl)-alpha-D-glucosamine + NADPH + H(+). The protein operates within cell wall biogenesis; peptidoglycan biosynthesis. Functionally, cell wall formation. This chain is UDP-N-acetylenolpyruvoylglucosamine reductase, found in Streptococcus pyogenes serotype M6 (strain ATCC BAA-946 / MGAS10394).